The chain runs to 188 residues: Elongation factor P (188 aa).

The protein belongs to the elongation factor P family.

Its subcellular location is the cytoplasm. It functions in the pathway protein biosynthesis; polypeptide chain elongation. In terms of biological role, involved in peptide bond synthesis. Stimulates efficient translation and peptide-bond synthesis on native or reconstituted 70S ribosomes in vitro. Probably functions indirectly by altering the affinity of the ribosome for aminoacyl-tRNA, thus increasing their reactivity as acceptors for peptidyl transferase. This is Elongation factor P from Wolbachia pipientis wMel.